Reading from the N-terminus, the 489-residue chain is Ribulose bisphosphate carboxylase large chain (489 aa).

Substrate contacts are provided by asparagine 128 and threonine 178. Lysine 180 serves as the catalytic Proton acceptor. Residue lysine 182 participates in substrate binding. Mg(2+) is bound by residues lysine 206, aspartate 208, and glutamate 209. Lysine 206 carries the N6-carboxylysine modification. The active-site Proton acceptor is the histidine 298. Positions 299, 331, and 383 each coordinate substrate.

This sequence belongs to the RuBisCO large chain family. Type I subfamily. In terms of assembly, heterohexadecamer of 8 large chains and 8 small chains. Requires Mg(2+) as cofactor.

The enzyme catalyses 2 (2R)-3-phosphoglycerate + 2 H(+) = D-ribulose 1,5-bisphosphate + CO2 + H2O. It catalyses the reaction D-ribulose 1,5-bisphosphate + O2 = 2-phosphoglycolate + (2R)-3-phosphoglycerate + 2 H(+). RuBisCO catalyzes two reactions: the carboxylation of D-ribulose 1,5-bisphosphate, the primary event in carbon dioxide fixation, as well as the oxidative fragmentation of the pentose substrate. Both reactions occur simultaneously and in competition at the same active site. This is Ribulose bisphosphate carboxylase large chain from Nitrosospira multiformis (strain ATCC 25196 / NCIMB 11849 / C 71).